A 381-amino-acid chain; its full sequence is Phenylalanine dehydrogenase (381 aa).

Residue R55 coordinates NAD(+). K79 serves as a coordination point for L-phenylalanine. Residue K91 is part of the active site. NAD(+) is bound by residues D126, S157, T161, 191-197, 214-215, 254-255, and 275-277; these read GLGKVGY, DI, AM, and SAN. N277 is a binding site for L-phenylalanine.

This sequence belongs to the Glu/Leu/Phe/Val dehydrogenases family.

It catalyses the reaction L-phenylalanine + NAD(+) + H2O = 3-phenylpyruvate + NH4(+) + NADH + H(+). Its pathway is amino-acid biosynthesis; L-phenylalanine biosynthesis; L-phenylalanine from phenylpyruvate (PDH route): step 1/1. Its function is as follows. Catalyzes the reversible NAD(+)-dependent oxidative deamination of L-phenylalanine to phenylpyruvate. In Lysinibacillus sphaericus (Bacillus sphaericus), this protein is Phenylalanine dehydrogenase.